Reading from the N-terminus, the 584-residue chain is Alkaline nuclease (584 aa).

The disordered stretch occupies residues 409-429; sequence GGGADHHLRGSPGDSPPPIPF.

This sequence belongs to the herpesviridae alkaline nuclease family. In terms of assembly, interacts with major DNA-binding protein; this interaction increases the nuclease processivity of the alkaline exonuclease.

It localises to the host nucleus. Its subcellular location is the host cytoplasm. Plays a role in processing non linear or branched viral DNA intermediates in order to promote the production of mature packaged unit-length linear progeny viral DNA molecules. Exhibits endonuclease and exonuclease activities and accepts both double-stranded and single-stranded DNA as substrate. Exonuclease digestion of DNA is in the 5'-&gt; 3' direction and the products are 5'-monophosphate nucleosides. Additionally, forms a recombinase with the major DNA-binding protein, which displays strand exchange activity. The polypeptide is Alkaline nuclease (UL98) (Homo sapiens (Human)).